Here is a 187-residue protein sequence, read N- to C-terminus: MSFPLHPSLVNGITKGNPSFQGGVLKCKCSTSPVTVTLRSNVAHNHACGCSKCWKPEGALFSIVSVVPVDKLEVTANGDKLAVVDPSATILRHACTGCGVHLYGRIEKDHAFKGLDFVHTELSDEKGWQEPQFAGFVTSIIEQGFDARHIDDVRAQFESLGLESYDALNPPLMNAIAAFTAANEAKA.

A CENP-V/GFA domain is found at 20–166; that stretch reads FQGGVLKCKC…FESLGLESYD (147 aa). Cys27, Cys29, Cys48, Cys50, Cys53, Cys95, and Cys98 together coordinate Zn(2+).

This sequence belongs to the Gfa family. Requires Zn(2+) as cofactor.

It carries out the reaction S-(hydroxymethyl)glutathione = glutathione + formaldehyde. It participates in one-carbon metabolism; formaldehyde degradation; formate from formaldehyde (glutathione route): step 1/3. Its function is as follows. Catalyzes the condensation of formaldehyde and glutathione to S-hydroxymethylglutathione. In Verticillium alfalfae (strain VaMs.102 / ATCC MYA-4576 / FGSC 10136) (Verticillium wilt of alfalfa), this protein is Putative glutathione-dependent formaldehyde-activating enzyme.